Reading from the N-terminus, the 154-residue chain is Fimbrial protein (154 aa).

The propeptide at 1 to 6 is leader sequence; the sequence is MKAQKG. N-methylphenylalanine is present on Phe7. A helical transmembrane segment spans residues 7–27; it reads FTLIELMIVVAIIGILAAIAI. Cys133 and Cys151 are disulfide-bonded. An O-linked (FucNAc...) serine glycan is attached at Ser154.

It belongs to the N-Me-Phe pilin family. As to quaternary structure, the pili are polar flexible filaments of about 5.4 nanometers diameter and 2.5 micrometers average length; they consist of only a single polypeptide chain arranged in a helical configuration of five subunits per turn in the assembled pilus. In terms of processing, O-glycosylated; glycan consists of 5NbetaOHC47NFmPse(alpha2-4)Xyl(beta1-3)FucNAc in beta1-O linkage to Ser.

The protein localises to the fimbrium. It localises to the membrane. The chain is Fimbrial protein (pilA) from Pseudomonas aeruginosa.